Here is a 443-residue protein sequence, read N- to C-terminus: Thymidine phosphorylase (443 aa).

Belongs to the thymidine/pyrimidine-nucleoside phosphorylase family. In terms of assembly, homodimer.

The enzyme catalyses thymidine + phosphate = 2-deoxy-alpha-D-ribose 1-phosphate + thymine. Its pathway is pyrimidine metabolism; dTMP biosynthesis via salvage pathway; dTMP from thymine: step 1/2. The enzymes which catalyze the reversible phosphorolysis of pyrimidine nucleosides are involved in the degradation of these compounds and in their utilization as carbon and energy sources, or in the rescue of pyrimidine bases for nucleotide synthesis. The polypeptide is Thymidine phosphorylase (Shewanella sp. (strain MR-4)).